A 444-amino-acid polypeptide reads, in one-letter code: Maintenance of mitochondrial morphology protein 1 (444 aa).

At methionine 1–glycine 110 the chain is on the lumenal side. The helical transmembrane segment at phenylalanine 111–phenylalanine 131 threads the bilayer. The Cytoplasmic portion of the chain corresponds to serine 132–glutamate 444. The region spanning proline 207–proline 419 is the SMP-LTD domain.

This sequence belongs to the MMM1 family. In terms of assembly, homodimer. Component of the ER-mitochondria encounter structure (ERMES) or MDM complex, composed of MMM1, MDM10, MDM12 and MDM34. An MMM1 homodimer associates with one molecule of MDM12 on each side in a pairwise head-to-tail manner, and the SMP-LTD domains of MMM1 and MDM12 generate a continuous hydrophobic tunnel for phospholipid trafficking.

The protein resides in the endoplasmic reticulum membrane. In terms of biological role, component of the ERMES/MDM complex, which serves as a molecular tether to connect the endoplasmic reticulum (ER) and mitochondria. Components of this complex are involved in the control of mitochondrial shape and protein biogenesis, and function in nonvesicular lipid trafficking between the ER and mitochondria. The MDM12-MMM1 subcomplex functions in the major beta-barrel assembly pathway that is responsible for biogenesis of all outer membrane beta-barrel proteins, and acts in a late step after the SAM complex. The MDM10-MDM12-MMM1 subcomplex further acts in the TOM40-specific pathway after the action of the MDM12-MMM1 complex. Essential for establishing and maintaining the structure of mitochondria and maintenance of mtDNA nucleoids. This chain is Maintenance of mitochondrial morphology protein 1, found in Vanderwaltozyma polyspora (strain ATCC 22028 / DSM 70294 / BCRC 21397 / CBS 2163 / NBRC 10782 / NRRL Y-8283 / UCD 57-17) (Kluyveromyces polysporus).